The primary structure comprises 565 residues: MSEQKLALNEYLKTDSDYLRGTIKEGLDSAVTGSFSDGDQQLIKFHGFYQQDDRDLRNERKEQKLEPLYSFMLRARVPGGICSPQQWLGVDKIASTLTSSNSIRLTTRQTFQYHGIPKRNLKTIIQDLDREALDSIAACGDVNRNVMCNPNPVESKLHEQAYAVAKQLSDHLLPHTRAYAEIWLDEEKLLSTEDETVEPVYGKTYLPRKFKMAVAVPPDNDVDVYTNDLGFIAVAENGELVGFNLTAGGGMGSTHGEVETFPRLADDFGFIKTADVMKFAEAVMTVQRDWGNRVNRKRSRLKYTIVDHGYEKFKAEVELRAGVKFEPKRDVVIGDRGDRYGWVEGVDRKWHLTLFIESGRIKDLPGQTLQTGLREIAKIHKGDFRMTSNQNMIIAGVAAEDKATIEGLARKHGLLGQVLTQTRGHSIACVALPTCPLAMAEAERYFPEFIDHIDALQAKHGISEQAIVVRMTGCPNGCARPFAAEIGLVGKAPGRYNLYLGASFEGTRLNKMHRENIQEAEILAELDTLFGRYAVERDAGETFGNFTVRVGVVKAVIDAAKDFHG.

4 residues coordinate [4Fe-4S] cluster: C429, C435, C474, and C478. C478 is a siroheme binding site.

It belongs to the nitrite and sulfite reductase 4Fe-4S domain family. Alpha(8)-beta(8). The alpha component is a flavoprotein, the beta component is a hemoprotein. Siroheme serves as cofactor. [4Fe-4S] cluster is required as a cofactor.

It carries out the reaction hydrogen sulfide + 3 NADP(+) + 3 H2O = sulfite + 3 NADPH + 4 H(+). The protein operates within sulfur metabolism; hydrogen sulfide biosynthesis; hydrogen sulfide from sulfite (NADPH route): step 1/1. Functionally, component of the sulfite reductase complex that catalyzes the 6-electron reduction of sulfite to sulfide. This is one of several activities required for the biosynthesis of L-cysteine from sulfate. This Shewanella baltica (strain OS223) protein is Sulfite reductase [NADPH] hemoprotein beta-component.